The chain runs to 486 residues: MVATPSISSQTKGVVRQVIGPVLDVEFPAGKLPKILNALRIEAKNPAGQDIALTAEVQQLLGDHRVRAVAMSGTDGLVRGMEAIDTGAPISVPVGEATLGRIFNVLGEPVDEQGPVNTKDTAPIHRAAPKLTDLETKPKVFETGIKVIDLLAPYRQGGKVGLFGGAGVGKTVLIQELINNIAKEHGGVSVFGGVGERTREGNDLYEEFKESGVINADDLTQSKVALCFGQMNEPPGARMRVGLSALTMAEHFRDVNKQDVLLFVDNIFRFVQAGSEVSALLGRMPSAVGYQPTLGTDVGELQERITSTLEGSITSIQAVYVPADDLTDPAPATTFAHLDATTVLARALAAKGIYPAVDPLDSTSTMLQPSVVGDEHYKTARAVQSTLQRYKELQDIIAILGLDELSEEDRLTVDRARKIEKFLSQPFFVAEIFTGMSGKYVKLEDTIAGFNMILSGELDDLPEQAFYLVGNIDEVKAKAEKIKSEK.

Position 164–171 (164–171 (GGAGVGKT)) interacts with ATP.

It belongs to the ATPase alpha/beta chains family. As to quaternary structure, F-type ATPases have 2 components, CF(1) - the catalytic core - and CF(0) - the membrane proton channel. CF(1) has five subunits: alpha(3), beta(3), gamma(1), delta(1), epsilon(1). CF(0) has four main subunits: a(1), b(1), b'(1) and c(9-12).

It localises to the cellular thylakoid membrane. It catalyses the reaction ATP + H2O + 4 H(+)(in) = ADP + phosphate + 5 H(+)(out). Its function is as follows. Produces ATP from ADP in the presence of a proton gradient across the membrane. The catalytic sites are hosted primarily by the beta subunits. The chain is ATP synthase subunit beta from Prochlorococcus marinus (strain AS9601).